We begin with the raw amino-acid sequence, 1220 residues long: DNA polymerase catalytic subunit (1220 aa).

2 disordered regions span residues 21 to 43 (GKRPFFRPGSGQTAETERPRPPQ) and 641 to 691 (QADA…KPGV). Polar residues predominate over residues 646–660 (SETSELAMDSQSHAF).

The protein belongs to the DNA polymerase type-B family. Forms a complex with the ssDNA-binding protein, the DNA polymerase processivity factor, and the alkaline exonuclease. Interacts with the helicase-primase complex composed of the primase, the helicase and the primase-associated factor; this interaction may coordinate leading and lagging strand DNA synthesis at the replication fork.

It localises to the host nucleus. The catalysed reaction is DNA(n) + a 2'-deoxyribonucleoside 5'-triphosphate = DNA(n+1) + diphosphate. It catalyses the reaction Endonucleolytic cleavage to 5'-phosphomonoester.. Functionally, replicates viral genomic DNA. The replication complex is composed of six viral proteins: the DNA polymerase, processivity factor, primase, primase-associated factor, helicase, and ssDNA-binding protein. Additionally, the polymerase contains an intrinsic ribonuclease H (RNase H) activity that specifically degrades RNA/DNA heteroduplexes or duplex DNA substrates in the 5' to 3' direction. Therefore, it can catalyze the excision of the RNA primers that initiate the synthesis of Okazaki fragments at a replication fork during viral DNA replication. The chain is DNA polymerase catalytic subunit from Equus caballus (Horse).